The following is a 103-amino-acid chain: Co-chaperonin GroES (103 aa).

The protein belongs to the GroES chaperonin family. As to quaternary structure, heptamer of 7 subunits arranged in a ring. Interacts with the chaperonin GroEL.

It is found in the cytoplasm. Functionally, together with the chaperonin GroEL, plays an essential role in assisting protein folding. The GroEL-GroES system forms a nano-cage that allows encapsulation of the non-native substrate proteins and provides a physical environment optimized to promote and accelerate protein folding. GroES binds to the apical surface of the GroEL ring, thereby capping the opening of the GroEL channel. This is Co-chaperonin GroES from Prochlorococcus marinus (strain MIT 9313).